The sequence spans 266 residues: Glutathione S-transferase AN1595 (266 aa).

The GST N-terminal domain maps to 43–123 (SFGKLYTYKR…HVTNEDSTTT (81 aa)). 4 residues coordinate glutathione: K93, E107, C108, and N143. Substrate is bound at residue K93. The region spanning 128–259 (SSLDFVQIIR…VEEGLPNAPP (132 aa)) is the GST C-terminal domain.

Belongs to the GST superfamily.

The protein operates within secondary metabolite biosynthesis; terpenoid biosynthesis. Glutathione S-transferase; part of the gene cluster that mediates the biosynthesis of the diterpene ent-pimara-8(14),15-diene (PD). Within the cluster, the HMG-CoA reductase AN1593 functions in the mevalonate pathway, which produces isoprenoid precursors. The geranylgeranyl pyrophosphate (GGPP) synthase AN1592 is needed in the formation of GGPP, the precursor for diterpenes. Lastly, the pimaradiene synthase pbcA performs the 2 cyclization steps that convert GGPP to ent-pimara-8(14),15-diene. The putative roles of the remaining cluster enzymes in ent-pimara-8(14),15-diene biosynthesis is unclear. The cytochrome P450 monooxygenase AN1598, the glutathione S-transferase AN1595, the oxidoreductases AN1596 and AN1597 probably function as decorative enzymes. It is possible that in biological conditions the compound is oxidized to ent-pimara-8(14),15-dien-19-oic acid, which is a bioactive diterpene compound predominant in many plant extracts. The sequence is that of Glutathione S-transferase AN1595 from Emericella nidulans (strain FGSC A4 / ATCC 38163 / CBS 112.46 / NRRL 194 / M139) (Aspergillus nidulans).